A 224-amino-acid polypeptide reads, in one-letter code: Protein-L-isoaspartate O-methyltransferase (224 aa).

Residue Ser70 is part of the active site.

It belongs to the methyltransferase superfamily. L-isoaspartyl/D-aspartyl protein methyltransferase family.

The protein localises to the cytoplasm. The enzyme catalyses [protein]-L-isoaspartate + S-adenosyl-L-methionine = [protein]-L-isoaspartate alpha-methyl ester + S-adenosyl-L-homocysteine. Functionally, catalyzes the methyl esterification of L-isoaspartyl residues in peptides and proteins that result from spontaneous decomposition of normal L-aspartyl and L-asparaginyl residues. It plays a role in the repair and/or degradation of damaged proteins. In Cellvibrio japonicus (strain Ueda107) (Pseudomonas fluorescens subsp. cellulosa), this protein is Protein-L-isoaspartate O-methyltransferase.